The primary structure comprises 259 residues: MQLQLICEDAALQPYLDAIASKWQLTHDADSHFALVLTFERLELRKLDEPKLGAIYVDLAGGAVAHRRKFGGGKGQAIAKAAGLNKGATPTVLDGTAGLGRDAFVLASLGCKVQMVERNPVVAALLDDGLTRAKKDDEIGAWVSERMSLLHASSHDALAALASDAEFVRPDVVYLDPMYPHPENKKKTALVKKEMRVFQSLVGADTDADALLTPALALATKRVVVKRPDYAEWLDGVKPSMAIETKKNRFDVYVNASMS.

S-adenosyl-L-methionine contacts are provided by residues 101-102 (RD), 117-118 (ER), 153-154 (SS), and Asp-176.

It belongs to the methyltransferase superfamily. RsmJ family.

Its subcellular location is the cytoplasm. It carries out the reaction guanosine(1516) in 16S rRNA + S-adenosyl-L-methionine = N(2)-methylguanosine(1516) in 16S rRNA + S-adenosyl-L-homocysteine + H(+). Its function is as follows. Specifically methylates the guanosine in position 1516 of 16S rRNA. The polypeptide is Ribosomal RNA small subunit methyltransferase J (Vibrio vulnificus (strain CMCP6)).